Consider the following 89-residue polypeptide: Protein S100-A8 (89 aa).

An N-acetylalanine modification is found at alanine 2. EF-hand domains follow at residues 13–48 (IEVY…FVQN) and 46–81 (VQNK…VGVA). Zn(2+) contacts are provided by histidine 17 and histidine 27. Aspartate 33 serves as a coordination point for Ca(2+). At cysteine 42 the chain carries S-nitrosocysteine. Residues aspartate 59, asparagine 61, aspartate 63, and glutamate 70 each coordinate Ca(2+). Residue histidine 83 coordinates Zn(2+).

This sequence belongs to the S-100 family. Homodimer. Preferentially exists as a heterodimer or heterotetramer with S100A9 known as calprotectin (S100A8/A9). S100A8 interacts with AGER, ATP2A2 and with the heterodimeric complex formed by TLR4 and LY96. Calprotectin (S100A8/9) interacts with CEACAM3 and tubulin filaments in a calcium-dependent manner. Heterotetrameric calprotectin (S100A8/A9) interacts with ANXA6 and associates with tubulin filaments in activated monocytes. S100A8 and calprotectin (S100A8/9) interact with NCF2/P67PHOX, RAC1 and RAC2. Calprotectin (S100A8/9) interacts with CYBA and CYBB. Calprotectin (S100A8/9) interacts with NOS2 to form the iNOS-S100A8/A9 transnitrosylase complex. Calprotectin (S100A8/9) interacts with CD69.

The protein resides in the secreted. Its subcellular location is the cytoplasm. The protein localises to the cytoskeleton. It localises to the cell membrane. S100A8 is a calcium- and zinc-binding protein which plays a prominent role in the regulation of inflammatory processes and immune response. It can induce neutrophil chemotaxis and adhesion. Predominantly found as calprotectin (S100A8/A9) which has a wide plethora of intra- and extracellular functions. The intracellular functions include: facilitating leukocyte arachidonic acid trafficking and metabolism, modulation of the tubulin-dependent cytoskeleton during migration of phagocytes and activation of the neutrophilic NADPH-oxidase. Also participates in regulatory T-cell differentiation together with CD69. Activates NADPH-oxidase by facilitating the enzyme complex assembly at the cell membrane, transferring arachidonic acid, an essential cofactor, to the enzyme complex and S100A8 contributes to the enzyme assembly by directly binding to NCF2/P67PHOX. The extracellular functions involve pro-inflammatory, antimicrobial, oxidant-scavenging and apoptosis-inducing activities. Its pro-inflammatory activity includes recruitment of leukocytes, promotion of cytokine and chemokine production, and regulation of leukocyte adhesion and migration. Acts as an alarmin or a danger associated molecular pattern (DAMP) molecule and stimulates innate immune cells via binding to pattern recognition receptors such as Toll-like receptor 4 (TLR4) and receptor for advanced glycation endproducts (AGER). Binding to TLR4 and AGER activates the MAP-kinase and NF-kappa-B signaling pathways resulting in the amplification of the pro-inflammatory cascade. Has antimicrobial activity towards bacteria and fungi and exerts its antimicrobial activity probably via chelation of Zn(2+) which is essential for microbial growth. Can induce cell death via autophagy and apoptosis and this occurs through the cross-talk of mitochondria and lysosomes via reactive oxygen species (ROS) and the process involves BNIP3. Can regulate neutrophil number and apoptosis by an anti-apoptotic effect; regulates cell survival via ITGAM/ITGB and TLR4 and a signaling mechanism involving MEK-ERK. Its role as an oxidant scavenger has a protective role in preventing exaggerated tissue damage by scavenging oxidants. The iNOS-S100A8/A9 transnitrosylase complex is proposed to direct selective inflammatory stimulus-dependent S-nitrosylation of multiple targets such as GAPDH, ANXA5, EZR, MSN and VIM by recognizing a [IL]-x-C-x-x-[DE] motif; S100A8 seems to contribute to S-nitrosylation site selectivity. This is Protein S100-A8 (S100a8) from Rattus norvegicus (Rat).